A 229-amino-acid polypeptide reads, in one-letter code: Urease accessory protein UreF (229 aa).

Belongs to the UreF family. In terms of assembly, ureD, UreF and UreG form a complex that acts as a GTP-hydrolysis-dependent molecular chaperone, activating the urease apoprotein by helping to assemble the nickel containing metallocenter of UreC. The UreE protein probably delivers the nickel.

It localises to the cytoplasm. Required for maturation of urease via the functional incorporation of the urease nickel metallocenter. The protein is Urease accessory protein UreF of Staphylococcus saprophyticus subsp. saprophyticus (strain ATCC 15305 / DSM 20229 / NCIMB 8711 / NCTC 7292 / S-41).